We begin with the raw amino-acid sequence, 526 residues long: MSVSSIADKIVSESILIVDFGSQVTQLIARRVREAGVYSEIVPFNRAEEAFQRLQPKGIILSGSPASVVAEGSPRAPESFFQAGIPIFGICYGQQVMCHQLGGKVTANDVDGEFGRAFIDVIAPSPLFENLWKVGEKHQVWMSHADRVEALPEGFKPIAVSDGAPFALIADEKRRFYGMQFHPEVVHTPDGGKLIAHFVHDICGLAGDWTMAEFRQTKIAEIRKQVGDGRVICGLSGGVDSSVTAVLVHEAIGDQLTCVFVDHGLMRQGEAEQVVSLFREHYGIKLVHVNAEDRFLAGLKGVTDPETKRKFIGKTFIEIFEEEAKKIGGADFLAQGTLYPDVIESVSFLGGPSVTIKSHHNVGGLPERMNMKLVEPLRELFKDEVRDLGRELGMPDVFVDRHPFPGPGLAIRIPGEVTKERCDILRKADAVYLEEIRNAGLYNAIWQAFAVLLPVRTVGVMGDGRTYDSVCALRAVTSTDGMTAEIYPFQPEFLANVATRIVNEVRGINRVTYDFTSKPPGTIEWE.

The Glutamine amidotransferase type-1 domain maps to 14 to 208 (SILIVDFGSQ…VHDICGLAGD (195 aa)). Residue cysteine 91 is the Nucleophile of the active site. Catalysis depends on residues histidine 182 and glutamate 184. The 193-residue stretch at 209-401 (WTMAEFRQTK…LGMPDVFVDR (193 aa)) folds into the GMPS ATP-PPase domain. Residue 236–242 (SGGVDSS) coordinates ATP.

As to quaternary structure, homodimer.

The enzyme catalyses XMP + L-glutamine + ATP + H2O = GMP + L-glutamate + AMP + diphosphate + 2 H(+). The protein operates within purine metabolism; GMP biosynthesis; GMP from XMP (L-Gln route): step 1/1. Functionally, catalyzes the synthesis of GMP from XMP. This chain is GMP synthase [glutamine-hydrolyzing], found in Zymomonas mobilis subsp. mobilis (strain ATCC 31821 / ZM4 / CP4).